The following is a 202-amino-acid chain: Matrix protein (202 aa).

Positions 13–32 (DEEIPKPGTPSAPPDDDDLW) are disordered. The PPXY motif signature appears at 35–38 (PPEY).

This sequence belongs to the lyssavirus matrix protein family. Homomultimer. Interacts with nucleoprotein and with the cytoplasmic domain of glycoprotein.

It is found in the virion membrane. Its subcellular location is the host endomembrane system. Functionally, plays a major role in assembly and budding of virion. Completely covers the ribonucleoprotein coil and keep it in condensed bullet-shaped form. Inhibits viral transcription and stimulates replication. Plays a major role in early induction of TRAIL-mediated apoptosis in infected neurons. This is Matrix protein (M) from Lagos bat virus (LBV).